The following is a 115-amino-acid chain: Large ribosomal subunit protein uL18 (115 aa).

Belongs to the universal ribosomal protein uL18 family. Part of the 50S ribosomal subunit; part of the 5S rRNA/L5/L18/L25 subcomplex. Contacts the 5S and 23S rRNAs.

This is one of the proteins that bind and probably mediate the attachment of the 5S RNA into the large ribosomal subunit, where it forms part of the central protuberance. This chain is Large ribosomal subunit protein uL18, found in Vesicomyosocius okutanii subsp. Calyptogena okutanii (strain HA).